The primary structure comprises 144 residues: Glutamyl-tRNA(Gln) amidotransferase subunit C, mitochondrial (144 aa).

A mitochondrion-targeting transit peptide spans 1–17 (MFRRSVSFVRSHVLRSF).

This sequence belongs to the GatC family. Subunit of the heterotrimeric GatCAB amidotransferase (AdT) complex, composed of A, B and C subunits.

It is found in the mitochondrion. It carries out the reaction L-glutamyl-tRNA(Gln) + L-glutamine + ATP + H2O = L-glutaminyl-tRNA(Gln) + L-glutamate + ADP + phosphate + H(+). Its function is as follows. Allows the formation of correctly charged Gln-tRNA(Gln) through the transamidation of misacylated Glu-tRNA(Gln) in the mitochondria. The reaction takes place in the presence of glutamine and ATP through an activated gamma-phospho-Glu-tRNA(Gln). The chain is Glutamyl-tRNA(Gln) amidotransferase subunit C, mitochondrial from Ixodes scapularis (Black-legged tick).